Reading from the N-terminus, the 64-residue chain is Cytochrome c oxidase subunit 5C-2 (64 aa).

A helical membrane pass occupies residues S15–W34.

The protein belongs to the cytochrome c oxidase subunit 5C family.

It localises to the mitochondrion inner membrane. In terms of biological role, this protein is one of the nuclear-coded polypeptide chains of cytochrome c oxidase, the terminal oxidase in mitochondrial electron transport. The polypeptide is Cytochrome c oxidase subunit 5C-2 (Arabidopsis thaliana (Mouse-ear cress)).